We begin with the raw amino-acid sequence, 131 residues long: Large ribosomal subunit protein uL22 (131 aa).

Positions 1–11 (MAKGHRSKIKR) are enriched in basic residues. The disordered stretch occupies residues 1-20 (MAKGHRSKIKRERNEVRDTR).

The protein belongs to the universal ribosomal protein uL22 family. As to quaternary structure, part of the 50S ribosomal subunit.

In terms of biological role, this protein binds specifically to 23S rRNA; its binding is stimulated by other ribosomal proteins, e.g. L4, L17, and L20. It is important during the early stages of 50S assembly. It makes multiple contacts with different domains of the 23S rRNA in the assembled 50S subunit and ribosome. Its function is as follows. The globular domain of the protein is located near the polypeptide exit tunnel on the outside of the subunit, while an extended beta-hairpin is found that lines the wall of the exit tunnel in the center of the 70S ribosome. The protein is Large ribosomal subunit protein uL22 of Agathobacter rectalis (strain ATCC 33656 / DSM 3377 / JCM 17463 / KCTC 5835 / VPI 0990) (Eubacterium rectale).